A 147-amino-acid polypeptide reads, in one-letter code: 3-dehydroquinate dehydratase (147 aa).

Y24 (proton acceptor) is an active-site residue. Substrate-binding residues include N74, H80, and D87. H100 serves as the catalytic Proton donor. Substrate contacts are provided by residues 101-102 (LS) and R111.

It belongs to the type-II 3-dehydroquinase family. In terms of assembly, homododecamer.

It carries out the reaction 3-dehydroquinate = 3-dehydroshikimate + H2O. The protein operates within metabolic intermediate biosynthesis; chorismate biosynthesis; chorismate from D-erythrose 4-phosphate and phosphoenolpyruvate: step 3/7. Functionally, catalyzes a trans-dehydration via an enolate intermediate. This is 3-dehydroquinate dehydratase from Azorhizobium caulinodans (strain ATCC 43989 / DSM 5975 / JCM 20966 / LMG 6465 / NBRC 14845 / NCIMB 13405 / ORS 571).